Here is a 443-residue protein sequence, read N- to C-terminus: Aklavinone 7-beta-L-rhodosaminyltransferase (443 aa).

The N-terminal stretch at methionine 1–alanine 23 is a signal peptide.

Belongs to the glycosyltransferase 28 family.

It catalyses the reaction dTDP-beta-L-rhodosamine + aklavinone = aclacinomycin T + dTDP + 2 H(+). Its activity is regulated as follows. The activity of AknS is substantially increased by the addition of the accessory protein AknT. Involved in the biosynthesis of the anthracycline antitumor agent aclacinomycin A. Catalyzes the transfer of the proximal deoxyhexose, L-rhodosamine, from dTDP-beta-L-rhodosamine to the C7-OH of aklavinone aglycone to yield aclacinomycin T (rhodosaminyl-aklavinone). It can also use dTDP-2-deoxy-beta-L-fucose, TDP-2-deoxyfucose, dTDP-4-amino-2-deoxyrhamnose, TDP-L-rhodosamine as sugar donor and epsilon-rhodomycinone as sugar acceptor. The protein is Aklavinone 7-beta-L-rhodosaminyltransferase of Streptomyces galilaeus.